The following is an 82-amino-acid chain: 4-(gamma-L-glutamylamino)butanoyl-[BtrI acyl-carrier protein] monooxygenase BtrO (82 aa).

Homotetramer.

It catalyses the reaction 4-(gamma-L-glutamylamino)butanoyl-[BtrI ACP] + FMNH2 + O2 = 4-(gamma-L-glutamylamino)-(2S)-2-hydroxybutanoyl-[BtrI ACP] + FMN + H2O + H(+). The protein operates within antibiotic biosynthesis; butirosin biosynthesis. In terms of biological role, NAD(P)H:FMN oxidoreductase component of a two-component system involved in the biosynthesis of the side chain of the aminoglycoside antibiotics in the biosynthetic pathway of butirosin. Together with BtrO, mediates hydroxylation of gamma-L-Glu-GABA-S-BtrI. This Niallia circulans (Bacillus circulans) protein is 4-(gamma-L-glutamylamino)butanoyl-[BtrI acyl-carrier protein] monooxygenase BtrO (btrV).